A 372-amino-acid polypeptide reads, in one-letter code: Putative 26S proteasome regulatory subunit homolog MTH_1011 (372 aa).

ATP is bound at residue 164–171 (GSPGTGKT).

The protein belongs to the AAA ATPase family.

In terms of biological role, the 26S proteasome is involved in the ATP-dependent degradation of ubiquitinated proteins. The regulatory (or ATPase) complex confers ATP dependency and substrate specificity to the 26S complex. This chain is Putative 26S proteasome regulatory subunit homolog MTH_1011, found in Methanothermobacter thermautotrophicus (strain ATCC 29096 / DSM 1053 / JCM 10044 / NBRC 100330 / Delta H) (Methanobacterium thermoautotrophicum).